The sequence spans 414 residues: Methyl-CpG-binding domain protein 2 (414 aa).

The tract at residues 1–152 (MRAHPGGGRC…GPRATESGKR (152 aa)) is required for interaction with DHX9 and PRMT5. The disordered stretch occupies residues 1-163 (MRAHPGGGRC…DCPALPPGWK (163 aa)). Residues 77-95 (GRGRGRGRGRGRGRGRGRG) are compositionally biased toward basic residues. Residues 98-123 (QSGGSGLGGDGGGGAGGCGGGSGGGV) show a composition bias toward gly residues. Positions 148–216 (ESGKRMDCPA…SSFDFRTGKM (69 aa)) constitute an MBD domain. The residue at position 184 (S184) is a Phosphoserine. The tract at residues 217–244 (MPSKLQKNKQRLRNDPLNQNKGKPDLNT) is disordered. The span at 232–244 (PLNQNKGKPDLNT) shows a compositional bias: polar residues. S410 carries the post-translational modification Phosphoserine.

As to quaternary structure, heterodimer with MBD3 (via N-terminus). Component of the MeCP1 complex that contains HDAC1 and HDAC2. Component of the nucleosome remodeling and deacetylase (NuRD) repressor complex, composed of core proteins MTA1, MTA2, MTA3, RBBP4, RBBP7, HDAC1, HDAC2, MBD2, MBD3, and peripherally associated proteins CDK2AP1, CDK2AP2, GATAD2A, GATAD2B, CHD3, CHD4 and CHD5. The exact stoichiometry of the NuRD complex is unknown, and some subunits such as MBD2 and MBD3, GATAD2A and GATAD2B, and CHD3, CHD4 and CHD5 define mutually exclusive NuRD complexes. Interacts with CDK2AP1. Interacts with DHX9. Interacts with DNMT1. Interacts with GATAD2A/p66-alpha. Interacts with GATAD2B/p66-beta. Interacts with GPN1. Interacts with MIZF. Interacts with PRMT5. Interacts with SIN3A. Interacts with SPHK2. In terms of tissue distribution, highly expressed in brain, heart, kidney, lung, skeletal muscle, spleen and testis. Detected at lower levels in embryonic stem cells.

It localises to the nucleus. The protein resides in the chromosome. Binds CpG islands in promoters where the DNA is methylated at position 5 of cytosine within CpG dinucleotides. Binds hemimethylated DNA as well. Recruits histone deacetylases and DNA methyltransferases to chromatin. Acts as a component of the histone deacetylase NuRD complex which participates in the remodeling of chromatin. Acts as transcriptional repressor and plays a role in gene silencing. Functions as a scaffold protein, targeting GATAD2A and GATAD2B to chromatin to promote repression. May enhance the activation of some unmethylated cAMP-responsive promoters. Selectively represses transcription activity of methylated rRNA promoters. The chain is Methyl-CpG-binding domain protein 2 from Mus musculus (Mouse).